Consider the following 157-residue polypeptide: Large ribosomal subunit protein uL11 (157 aa).

The protein belongs to the universal ribosomal protein uL11 family. As to quaternary structure, part of the ribosomal stalk of the 50S ribosomal subunit. Interacts with L10 and the large rRNA to form the base of the stalk. L10 forms an elongated spine to which L12 dimers bind in a sequential fashion forming a multimeric L10(L12)X complex.

Forms part of the ribosomal stalk which helps the ribosome interact with GTP-bound translation factors. This chain is Large ribosomal subunit protein uL11, found in Methanocorpusculum labreanum (strain ATCC 43576 / DSM 4855 / Z).